Consider the following 512-residue polypeptide: ETS translocation variant 3 (512 aa).

The segment at residues 35–116 (IQLWHFILEL…KGKRFTYKFN (82 aa)) is a DNA-binding region (ETS). The disordered stretch occupies residues 138–196 (QSAPPVPTASSRFHFPPLDTHSPTSDVQPGRFSASSLTASGQESSNGTDRKAELSXLED). Phosphoserine is present on residues S139, S159, and S315. The segment covering 158–184 (HSPTSDVQPGRFSASSLTASGQESSNG) has biased composition (polar residues). The tract at residues 341–512 (QFSIKLQPPP…QGLATAAADA (172 aa)) is disordered. A compositionally biased stretch (basic and acidic residues) spans 380–406 (IKVEPASEKDAESLRQSAREKEEHTXE). Residue K381 forms a Glycyl lysine isopeptide (Lys-Gly) (interchain with G-Cter in SUMO2) linkage. N6-acetyllysine; alternate is present on K388. A Glycyl lysine isopeptide (Lys-Gly) (interchain with G-Cter in SUMO2); alternate cross-link involves residue K388. The segment covering 443-452 (EPLEVTEDIE) has biased composition (acidic residues). Composition is skewed to basic and acidic residues over residues 453–468 (DRPGKEPSAPEKKEDA) and 479–491 (RWNDDPEARELSK).

It belongs to the ETS family.

Its subcellular location is the nucleus. Transcriptional repressor that contribute to growth arrest during terminal macrophage differentiation by repressing target genes involved in Ras-dependent proliferation. Represses MMP1 promoter activity. In Ateles geoffroyi (Black-handed spider monkey), this protein is ETS translocation variant 3 (ETV3).